The primary structure comprises 1196 residues: Ice nucleation protein (1196 aa).

The interval 172-1147 (ATYGSTLSGD…LSAGEDSTLI (976 aa)) is octapeptide periodicity. Disordered stretches follow at residues 269–304 (GYGS…GYGS), 319–352 (GSTQ…GYGS), and 415–442 (GSTQ…GSNL). Polar residues-rich tracts occupy residues 271–298 (GSTQ…GSNL) and 319–346 (GSTQ…GSNL).

The protein belongs to the bacterial ice nucleation protein family. In terms of assembly, membrane environment or aggregation seems to be required for ice nucleation activity.

Its subcellular location is the cell outer membrane. Its function is as follows. Ice nucleation proteins enable bacteria to nucleate crystallization in supercooled water. This chain is Ice nucleation protein (inaV), found in Pseudomonas syringae.